The following is a 1898-amino-acid chain: Receptor-type tyrosine-protein phosphatase F (1898 aa).

Residues 1–29 form the signal peptide; sequence MAPEPAPGRRMVPLVPALVMLGLMAGAHG. Over 30–1254 the chain is Extracellular; that stretch reads DSKPVFVKVP…QQQEEPEMLW (1225 aa). 3 consecutive Ig-like C2-type domains span residues 33-123, 135-224, and 232-314; these read PVFV…AKLS, PTID…ANLY, and PRFS…AQVT. Cysteine 54 and cysteine 107 form a disulfide bridge. 68–77 is a heparin binding site; that stretch reads KKGKKVSSQR. A glycan (N-linked (GlcNAc...) asparagine) is linked at asparagine 117. Cysteine 156 and cysteine 207 form a disulfide bridge. Asparagine 250 and asparagine 295 each carry an N-linked (GlcNAc...) asparagine glycan. Cysteines 253 and 298 form a disulfide. 8 Fibronectin type-III domains span residues 321 to 411, 416 to 510, 514 to 604, 609 to 706, 711 to 810, 811 to 905, 909 to 1001, and 1005 to 1089; these read PPID…TGEQ, PPRR…TQQG, QPAD…TAQS, PPQK…TDED, PPRK…TTGA, VPGR…PEDA, FPQN…TMPM, and FAKN…TAPD. A disordered region spans residues 693–713; sequence GPESSPVLVRTDEDVPSGPPR. Asparagine 721 is a glycosylation site (N-linked (GlcNAc...) asparagine). Residues asparagine 941 and asparagine 957 are each glycosylated (N-linked (GlcNAc...) asparagine). The helical transmembrane segment at 1255–1275 threads the bilayer; it reads VTGPVLAVILIILIVIAILLF. Over 1276–1898 the chain is Cytoplasmic; the sequence is KRKRTHSPSS…YLGSFDHYAT (623 aa). Serine 1296 carries the phosphoserine modification. Tyrosine-protein phosphatase domains are found at residues 1343-1598 and 1630-1889; these read FSQE…LLEA and MELE…ALEY. Substrate-binding positions include aspartate 1507, 1539–1545, and glutamine 1583; that span reads CSAGVGR. Residue cysteine 1539 is the Phosphocysteine intermediate of the active site. The active-site Phosphocysteine intermediate is cysteine 1830.

This sequence belongs to the protein-tyrosine phosphatase family. Receptor class 2A subfamily. As to quaternary structure, interacts with GRIP1. Interacts with PPFIA1, PPFIA2 and PPFIA3. Interacts with PTPRF.

The protein resides in the membrane. The enzyme catalyses O-phospho-L-tyrosyl-[protein] + H2O = L-tyrosyl-[protein] + phosphate. Possible cell adhesion receptor. It possesses an intrinsic protein tyrosine phosphatase activity (PTPase) and dephosphorylates EPHA2 regulating its activity. Its function is as follows. The first PTPase domain has enzymatic activity, while the second one seems to affect the substrate specificity of the first one. This chain is Receptor-type tyrosine-protein phosphatase F (Ptprf), found in Rattus norvegicus (Rat).